The primary structure comprises 271 residues: 3-methyl-2-oxobutanoate hydroxymethyltransferase (271 aa).

Mg(2+)-binding residues include D51 and D90. Residues D51 to S52, D90, and K118 contribute to the 3-methyl-2-oxobutanoate site. Mg(2+) is bound at residue E120. The active-site Proton acceptor is E186.

Belongs to the PanB family. In terms of assembly, homodecamer; pentamer of dimers. Mg(2+) is required as a cofactor.

It is found in the cytoplasm. It catalyses the reaction 3-methyl-2-oxobutanoate + (6R)-5,10-methylene-5,6,7,8-tetrahydrofolate + H2O = 2-dehydropantoate + (6S)-5,6,7,8-tetrahydrofolate. It functions in the pathway cofactor biosynthesis; (R)-pantothenate biosynthesis; (R)-pantoate from 3-methyl-2-oxobutanoate: step 1/2. Catalyzes the reversible reaction in which hydroxymethyl group from 5,10-methylenetetrahydrofolate is transferred onto alpha-ketoisovalerate to form ketopantoate. The polypeptide is 3-methyl-2-oxobutanoate hydroxymethyltransferase (Xanthomonas oryzae pv. oryzae (strain MAFF 311018)).